We begin with the raw amino-acid sequence, 389 residues long: Chalcone synthase 2 (389 aa).

Residue Cys164 is part of the active site.

Belongs to the thiolase-like superfamily. Chalcone/stilbene synthases family.

The enzyme catalyses (E)-4-coumaroyl-CoA + 3 malonyl-CoA + 3 H(+) = 2',4,4',6'-tetrahydroxychalcone + 3 CO2 + 4 CoA. The protein operates within secondary metabolite biosynthesis; flavonoid biosynthesis. The primary product of this enzyme is 4,2',4',6'-tetrahydroxychalcone (also termed naringenin-chalcone or chalcone) which can under specific conditions spontaneously isomerize into naringenin. The polypeptide is Chalcone synthase 2 (CHS2) (Solanum lycopersicum (Tomato)).